The primary structure comprises 692 residues: Protein arginine N-methyltransferase 7 (692 aa).

2 consecutive SAM-dependent MTase PRMT-type domains span residues 14–359 (ENSW…YSLW) and 368–692 (AKTV…QEKR).

The protein belongs to the class I-like SAM-binding methyltransferase superfamily. Protein arginine N-methyltransferase family. PRMT7 subfamily.

Its function is as follows. Essential arginine methyltransferase that can both catalyze the formation of omega-N monomethylarginine (MMA) and symmetrical dimethylarginine (sDMA). Specifically mediates the symmetrical dimethylation of arginine residues in the small nuclear ribonucleoproteins SmD1 and SmD3. The protein is Protein arginine N-methyltransferase 7 (Art7) of Drosophila pseudoobscura pseudoobscura (Fruit fly).